A 166-amino-acid chain; its full sequence is Small ribosomal subunit protein uS5 (166 aa).

Positions 11-74 constitute an S5 DRBM domain; that stretch reads LQEKLIAVNR…EQAKRNLNKV (64 aa).

This sequence belongs to the universal ribosomal protein uS5 family. Part of the 30S ribosomal subunit. Contacts proteins S4 and S8.

Functionally, with S4 and S12 plays an important role in translational accuracy. Its function is as follows. Located at the back of the 30S subunit body where it stabilizes the conformation of the head with respect to the body. In Aeromonas hydrophila subsp. hydrophila (strain ATCC 7966 / DSM 30187 / BCRC 13018 / CCUG 14551 / JCM 1027 / KCTC 2358 / NCIMB 9240 / NCTC 8049), this protein is Small ribosomal subunit protein uS5.